The primary structure comprises 662 residues: UvrABC system protein B (662 aa).

The Helicase ATP-binding domain occupies 31–188; sequence DNIEGGEKAQ…NDLVDIQFER (158 aa). 44–51 is an ATP binding site; sequence GATGTGKT. The Beta-hairpin motif lies at 97–120; sequence YYDYYQPEAYVPSSDTYIEKDSSV. The Helicase C-terminal domain maps to 435 to 601; sequence QIDDLLGEIN…TIKKEIRDLI (167 aa). A UVR domain is found at 626-661; the sequence is KELVKKLEKQMQEAVEVLDFELAAQIRDMMLEVKAL.

It belongs to the UvrB family. In terms of assembly, forms a heterotetramer with UvrA during the search for lesions. Interacts with UvrC in an incision complex.

It is found in the cytoplasm. In terms of biological role, the UvrABC repair system catalyzes the recognition and processing of DNA lesions. A damage recognition complex composed of 2 UvrA and 2 UvrB subunits scans DNA for abnormalities. Upon binding of the UvrA(2)B(2) complex to a putative damaged site, the DNA wraps around one UvrB monomer. DNA wrap is dependent on ATP binding by UvrB and probably causes local melting of the DNA helix, facilitating insertion of UvrB beta-hairpin between the DNA strands. Then UvrB probes one DNA strand for the presence of a lesion. If a lesion is found the UvrA subunits dissociate and the UvrB-DNA preincision complex is formed. This complex is subsequently bound by UvrC and the second UvrB is released. If no lesion is found, the DNA wraps around the other UvrB subunit that will check the other stand for damage. The polypeptide is UvrABC system protein B (Streptococcus pneumoniae serotype 19F (strain G54)).